Reading from the N-terminus, the 311-residue chain is Long form salivary protein D7L1 (311 aa).

Positions 1-21 are cleaved as a signal peptide; that stretch reads MIVTGVLLFILLELFAQGSQA. Cystine bridges form between Cys-37-Cys-73, Cys-69-Cys-128, Cys-178-Cys-211, and Cys-252-Cys-263.

The protein belongs to the PBP/GOBP family.

The protein localises to the secreted. Modulates blood feeding of female mosquitoes on vertebrate species by binding and sequestering different mediators involved in the host response. Binds leukotriene C4 and U-46619, a stable analog of thromboxane A2. Inhibits agonist-induced platelet aggregation. Exhibits vasodilating activity. This is Long form salivary protein D7L1 from Anopheles gambiae (African malaria mosquito).